The primary structure comprises 271 residues: Insulin-like growth factor-binding protein 5 (271 aa).

Positions 1-19 are cleaved as a signal peptide; sequence MVISVVLLLLAACAVPAQG. Residues 22–102 form the IGFBP N-terminal domain; that stretch reads SFVHCEPCDE…LHGRGVCLNE (81 aa). 6 disulfides stabilise this stretch: Cys26-Cys52, Cys29-Cys54, Cys37-Cys55, Cys44-Cys58, Cys66-Cys79, and Cys73-Cys99. The segment covering 109-121 has biased composition (basic and acidic residues); that stretch reads TKIERDSREHEEP. The disordered stretch occupies residues 109–129; that stretch reads TKIERDSREHEEPTTSEMAEE. A Phosphoserine modification is found at Ser115. The Thyroglobulin type-1 domain occupies 188–262; sequence QGPCRRHMEA…MEYVDGDFQC (75 aa). Intrachain disulfides connect Cys191–Cys218, Cys229–Cys240, and Cys242–Cys262.

In terms of assembly, interacts with IGF1; this interaction enhances the growth stimulatory effects of IGF1 on fibroblasts. Interacts with CAV1; this interaction allows trafficking of IGFBP5 from the plasma membrane to the nucleus. Interacts with NCL; this interaction is necessary for IGFBP5 localization to the nucleus. Mostly in kidney.

It is found in the secreted. Its subcellular location is the cytoplasm. The protein resides in the nucleus. Its function is as follows. Multifunctional protein that plays a critical role in regulating the availability of IGFs to their receptors and thereby regulates IGF-mediated cellular processes including proliferation, differentiation, and apoptosis in a cell-type specific manner. Increases the cell proliferation of osteoblasts, intestinal smooth muscle cells and neuroblastoma cells. Enhances adhesion and survival of epithelial cells but decreases adhesion of mesenchymal cells. Once secreted, acts as a major mediator of mTORC1-dependent feedback inhibition of IGF1 signaling. Also plays a role in the induction of extracellular matrix (ECM) production and deposition independently of its nuclear translocation and binding to IGFs. Acts itself as a growth factor that can act independently of IGFs to regulate bone formation. Acts as a ligand for the ROR1 receptor which triggers formation of ROR1/HER2 heterodimer to enhance CREB oncogenic signaling. In Rattus norvegicus (Rat), this protein is Insulin-like growth factor-binding protein 5 (Igfbp5).